The sequence spans 346 residues: Immunoglobulin heavy constant alpha (346 aa).

Ig-like domains follow at residues 6 to 96 (PSIF…KSVD), 118 to 212 (PRLS…VSIT), and 221 to 323 (PQVH…KSID). A disulfide bond links Cys26 and Cys83. N-linked (GlcNAc...) (complex) asparagine glycosylation occurs at Asn134. 2 cysteine pairs are disulfide-bonded: Cys139/Cys196 and Cys243/Cys306. An N-linked (GlcNAc...) (complex) asparagine glycan is attached at Asn333.

In terms of assembly, immunoglobulins are composed of two identical heavy chains and two identical light chains; disulfide-linked. Monomeric or polymeric. Part of the secretory IgA (sIgA) complex that consists of two, four or five IgA monomers, and two additional non-Ig polypeptides, namely the JCHAIN and the secretory component (the proteolytic product of PIGR). In terms of processing, N-glycosylated. N-glycans attached to Asn-134 varies from differentially fucosylated complex and hybrid to sialylated with N-glycoyl neuraminic acid types: GlcNAc2Man3GlcNAc2(Fuc); GlcNAc1Man4GlcNAc2(Fuc); GlcNAc1Man4GlcNAc2; Gal1GlcNAc2Man3GlcNAc2(Fuc); GlcNAc2Man3GlcNAc2; Gal1GlcNAc2Man3GlcNAc2; GlcNAc1Man3GlcNAc2; GlcNAc1Man2GlcNAc2 and NeuGc1Gal1GlcNAc2Man3GlcNAc2(Fuc). N-glycans attached to Asn-333 are mainly fucosylated complex types: GlcNAc2Man3GlcNAc2; GlcNAc1Man3GlcNAc2; GlcNAc1Man3GlcNAc2(Fuc); GlcNAc2Man3GlcNAc2(Fuc); Gal1GlcNAc2Man3GlcNAc2(Fuc); NeuGc1Gal1GlcNAc1Man3GlcNAc2(Fuc); NeuGc1Gal1GlcNAc2Man3GlcNAc2(Fuc) and NeuAc1Gal1GlcNAc2Man3GlcNAc2(Fuc).

The protein localises to the secreted. It is found in the cell membrane. Functionally, constant region of immunoglobulin heavy chains. Immunoglobulins, also known as antibodies, are membrane-bound or secreted glycoproteins produced by B lymphocytes. In the recognition phase of humoral immunity, the membrane-bound immunoglobulins serve as receptors which, upon binding of a specific antigen, trigger the clonal expansion and differentiation of B lymphocytes into immunoglobulins-secreting plasma cells. Secreted immunoglobulins mediate the effector phase of humoral immunity, which results in the elimination of bound antigens. The antigen binding site is formed by the variable domain of one heavy chain, together with that of its associated light chain. Thus, each immunoglobulin has two antigen binding sites with remarkable affinity for a particular antigen. The variable domains are assembled by a process called V-(D)-J rearrangement and can then be subjected to somatic hypermutations which, after exposure to antigen and selection, allow affinity maturation for a particular antigen. Ig alpha is the major immunoglobulin class in body secretions. The chain is Immunoglobulin heavy constant alpha (IGHA) from Equus asinus (Donkey).